We begin with the raw amino-acid sequence, 280 residues long: MEIIKTVVELQTALLKIREQNKSIGFVPTMGALHRGHIELVKQSVVENTISIVSIFVNPTQFNDKNDLLKYPRTLNADCKLLLQETNNHFVFAPSVEEIYSETNIQQFKFGHLETVMEGKLRPGHFNGVAQVVSRLFKIVKPNCAYFGEKDFQQLTIIRTLVRLLNLNVKIIPHPTVREPNGLALSSRNIHLTPKQKKNAGMIFKTLSKSRKEKNILSIQELKQKTINKINCIPDFRVEYFDLVDGNTLQSITDWKDTKYIVGCIAVYIGEVRLIDNITY.

30 to 37 provides a ligand contact to ATP; the sequence is MGALHRGH. The active-site Proton donor is His37. A (R)-pantoate-binding site is contributed by Gln61. Residue Gln61 coordinates beta-alanine. Residue 148–151 coordinates ATP; the sequence is GEKD. Gln154 is a (R)-pantoate binding site. ATP contacts are provided by residues Val177 and 185–188; that span reads LSSR.

It belongs to the pantothenate synthetase family. As to quaternary structure, homodimer.

It localises to the cytoplasm. It carries out the reaction (R)-pantoate + beta-alanine + ATP = (R)-pantothenate + AMP + diphosphate + H(+). It participates in cofactor biosynthesis; (R)-pantothenate biosynthesis; (R)-pantothenate from (R)-pantoate and beta-alanine: step 1/1. Functionally, catalyzes the condensation of pantoate with beta-alanine in an ATP-dependent reaction via a pantoyl-adenylate intermediate. This is Pantothenate synthetase from Azobacteroides pseudotrichonymphae genomovar. CFP2.